The chain runs to 375 residues: Monocyte differentiation antigen CD14 (375 aa).

Positions 1-19 are cleaved as a signal peptide; that stretch reads MERASCLLLLLLPLVHVSA. 2 disulfide bridges follow: cysteine 25/cysteine 36 and cysteine 34/cysteine 51. Asparagine 37 carries an N-linked (GlcNAc...) asparagine glycan. LRR repeat units lie at residues 54-82, 83-118, 119-144, 145-172, 173-196, 197-224, 225-251, 252-278, 279-299, 300-321, and 322-349; these read AVEVEIHAGGLNLEPFLKRVDADADPRQY, ADTVKALRVRRLTVGAAQVPAQLLVGALRVLAYSRL, KELTLEDLKITGTMPPLPLEATGLAL, SSLRLRNVSWATGRSWLAELQQWLKPGL, KVLSIAQAHSPAFSCEQVRAFPAL, TSLDLSDNPGLGERGLMAALCPHKFPAI, QNLALRNTGMETPTGVCAALAAAGVQP, HSLDLSHNSLRATVNPSAPRCMWSSAL, NSLNLSFAGLEQVPKGLPAKL, RVLDLSCNRLNRAPQPDELPEV, and DNLTLDGNPFLVPGTALPHEGSMNSGVV. An N-linked (GlcNAc...) asparagine glycan is attached at asparagine 151. Intrachain disulfides connect cysteine 187-cysteine 217 and cysteine 241-cysteine 272. Asparagine 282 is a glycosylation site (N-linked (GlcNAc...) asparagine). The required for response to bacterial lipopolysaccharide (LPS) stretch occupies residues 290–375; it reads QVPKGLPAKL…VLLQGARGFA (86 aa). The N-linked (GlcNAc...) asparagine glycan is linked to asparagine 323. Threonine 336 carries an O-linked (GalNAc...) threonine glycan. Residue asparagine 345 is the site of GPI-anchor amidated asparagine attachment. The propeptide at 346–375 is removed in mature form; sequence SGVVPACARSTLSVGVSGTLVLLQGARGFA.

In terms of assembly, interacts with LPS-bound LPB. Belongs to the lipopolysaccharide (LPS) receptor, a multi-protein complex containing at least CD14, LY96 and TLR4. Interacts with LPAR1. Interacts with the TLR2:TLR6 or TLR2:TLR1 heterodimers; upon interaction with ligands such as diacylated lipopeptides and triacylated lipopeptides, respectively. Interacts with MYO18A. Interacts with FSTL1. In terms of processing, N- and O- glycosylated. O-glycosylated with a core 1 or possibly core 8 glycan. In terms of tissue distribution, detected on macrophages (at protein level). Expressed strongly on the surface of monocytes and weakly on the surface of granulocytes; also expressed by most tissue macrophages.

It localises to the cell membrane. The protein resides in the secreted. The protein localises to the membrane raft. Its subcellular location is the golgi apparatus. Coreceptor for bacterial lipopolysaccharide. In concert with LBP, binds to monomeric lipopolysaccharide and delivers it to the LY96/TLR4 complex, thereby mediating the innate immune response to bacterial lipopolysaccharide (LPS). Acts via MyD88, TIRAP and TRAF6, leading to NF-kappa-B activation, cytokine secretion and the inflammatory response. Acts as a coreceptor for TLR2:TLR6 heterodimer in response to diacylated lipopeptides and for TLR2:TLR1 heterodimer in response to triacylated lipopeptides, these clusters trigger signaling from the cell surface and subsequently are targeted to the Golgi in a lipid-raft dependent pathway. Binds electronegative LDL (LDL(-)) and mediates the cytokine release induced by LDL(-). The sequence is that of Monocyte differentiation antigen CD14 (CD14) from Homo sapiens (Human).